Here is a 706-residue protein sequence, read N- to C-terminus: Elongation factor G (706 aa).

A tr-type G domain is found at Glu-12–Asn-288. Residues Ala-21 to Thr-28, Asp-85 to His-89, and Asn-139 to Asp-142 each bind GTP. A disordered region spans residues Asn-288–Pro-309. Residues His-297–Pro-309 show a composition bias toward basic and acidic residues.

The protein belongs to the TRAFAC class translation factor GTPase superfamily. Classic translation factor GTPase family. EF-G/EF-2 subfamily.

The protein localises to the cytoplasm. Its function is as follows. Catalyzes the GTP-dependent ribosomal translocation step during translation elongation. During this step, the ribosome changes from the pre-translocational (PRE) to the post-translocational (POST) state as the newly formed A-site-bound peptidyl-tRNA and P-site-bound deacylated tRNA move to the P and E sites, respectively. Catalyzes the coordinated movement of the two tRNA molecules, the mRNA and conformational changes in the ribosome. This is Elongation factor G from Salinibacter ruber (strain DSM 13855 / M31).